The sequence spans 351 residues: Spermidine/putrescine import ATP-binding protein PotA (351 aa).

An ABC transporter domain is found at 6–236 (LELRNVTKEY…PENAWVANFI (231 aa)). 38-45 (GPSGCGKT) contributes to the ATP binding site.

It belongs to the ABC transporter superfamily. Spermidine/putrescine importer (TC 3.A.1.11.1) family. As to quaternary structure, the complex is composed of two ATP-binding proteins (PotA), two transmembrane proteins (PotB and PotC) and a solute-binding protein (PotD).

It is found in the cell membrane. It carries out the reaction ATP + H2O + polyamine-[polyamine-binding protein]Side 1 = ADP + phosphate + polyamineSide 2 + [polyamine-binding protein]Side 1.. In terms of biological role, part of the ABC transporter complex PotABCD involved in spermidine/putrescine import. Responsible for energy coupling to the transport system. This Mycoplasma mycoides subsp. mycoides SC (strain CCUG 32753 / NCTC 10114 / PG1) protein is Spermidine/putrescine import ATP-binding protein PotA.